A 386-amino-acid polypeptide reads, in one-letter code: Galactokinase (386 aa).

Position 35-38 (35-38 (EHTD)) interacts with substrate. Residues S69 and 125 to 131 (GAGLSSS) contribute to the ATP site. S131 and E163 together coordinate Mg(2+). D175 (proton acceptor) is an active-site residue. Y224 is a binding site for substrate.

The protein belongs to the GHMP kinase family. GalK subfamily.

The protein resides in the cytoplasm. It carries out the reaction alpha-D-galactose + ATP = alpha-D-galactose 1-phosphate + ADP + H(+). The protein operates within carbohydrate metabolism; galactose metabolism. In terms of biological role, catalyzes the transfer of the gamma-phosphate of ATP to D-galactose to form alpha-D-galactose-1-phosphate (Gal-1-P). This chain is Galactokinase, found in Vibrio vulnificus (strain CMCP6).